Reading from the N-terminus, the 471-residue chain is Trigger factor (471 aa).

One can recognise a PPIase FKBP-type domain in the interval 169-254 (EDRVTIDYLG…VKEVAKPNEL (86 aa)). The interval 435–471 (VSKEELTAEDEDAASEAKPAKKAAAKKKAEEGKSEEA) is disordered. Basic and acidic residues predominate over residues 461-471 (KKAEEGKSEEA).

It belongs to the FKBP-type PPIase family. Tig subfamily.

The protein resides in the cytoplasm. It catalyses the reaction [protein]-peptidylproline (omega=180) = [protein]-peptidylproline (omega=0). Its function is as follows. Involved in protein export. Acts as a chaperone by maintaining the newly synthesized protein in an open conformation. Functions as a peptidyl-prolyl cis-trans isomerase. The polypeptide is Trigger factor (Brucella abortus (strain S19)).